The sequence spans 106 residues: Small ribosomal subunit protein bS18 (106 aa).

The tract at residues 1–39 is disordered; that stretch reads MNGRNNDMGRNGGADYDDRDFGRTPDLNADAPGRRRTGR.

This sequence belongs to the bacterial ribosomal protein bS18 family. Part of the 30S ribosomal subunit. Forms a tight heterodimer with protein bS6.

Functionally, binds as a heterodimer with protein bS6 to the central domain of the 16S rRNA, where it helps stabilize the platform of the 30S subunit. The protein is Small ribosomal subunit protein bS18 of Sorangium cellulosum (strain So ce56) (Polyangium cellulosum (strain So ce56)).